The sequence spans 495 residues: Neuronal acetylcholine receptor subunit beta-4 (495 aa).

The signal sequence occupies residues 1-20 (MRGTPLLLVSLFALLQPGDC). Residues 21-235 (RLANAEEKLM…IIKRKPLFYT (215 aa)) lie on the Extracellular side of the membrane. Residues N35, N92, N137, and N165 are each glycosylated (N-linked (GlcNAc...) asparagine). The cysteines at positions 152 and 166 are disulfide-linked. Residues 236-256 (INLIIPCVLITSLAILVFYLP) traverse the membrane as a helical segment. The Cytoplasmic portion of the chain corresponds to 257 to 264 (SDCGEKMT). Na(+) is bound at residue E261. The helical transmembrane segment at 265–285 (LCISVLLALTFFLLLISKIVP) threads the bilayer. Over 286–297 (PTSLDIPLIGKY) the chain is Extracellular. Residues 298–318 (LLFTMVLVTFSIVTTVCVLNV) form a helical membrane-spanning segment. The Cytoplasmic portion of the chain corresponds to 319-463 (HHRSPSTHTM…WKFVAMVVDR (145 aa)). A helical membrane pass occupies residues 464–484 (LFLWVFVIVCILGTMGLFLPP). Topologically, residues 485–495 (LFQIHAPSKGL) are extracellular.

Belongs to the ligand-gated ion channel (TC 1.A.9) family. Acetylcholine receptor (TC 1.A.9.1) subfamily. Beta-4/CHRNB4 sub-subfamily. Neuronal AChR is composed of two different types of subunits: alpha and beta. CHRNB4/Beta-4 subunit can be combined to CHRNA2/alpha-2, CHRNA3/alpha-3 or CHRNA4/alpha-4, CHRNA5/alpha-5 and CHRNB3/beta-3 to give rise to functional receptors. Forms stoichiometries such as (CHRNA3)2:(CHRNB4)3 or (CHRNA3:CHRNB4)2:CHRNB3. Interacts with RIC3; which is required for proper folding and assembly. Interacts with LYPD6. As to expression, predominantly expressed by immature T-cells in the thymus.

It localises to the synaptic cell membrane. It is found in the cell membrane. It carries out the reaction K(+)(in) = K(+)(out). It catalyses the reaction Na(+)(in) = Na(+)(out). The enzyme catalyses Ca(2+)(in) = Ca(2+)(out). Its activity is regulated as follows. Activated by a myriad of ligands such as acetylcholine, cytisine, nicotine, choline and epibatidine. The heteropentamer CHRNA3:CHRNB4 activity is blocked by the alpha-conotoxin ImI and AuIB. Functionally, component of neuronal acetylcholine receptors (nAChRs) that function as pentameric, ligand-gated cation channels with high calcium permeability among other activities. nAChRs are excitatory neurotrasnmitter receptors formed by a collection of nAChR subunits known to mediate synaptic transmission in the nervous system and the neuromuscular junction. Each nAchR subunit confers differential attributes to channel properties, including activation, deactivation and desensitization kinetics, pH sensitivity, cation permeability, and binding to allosteric modulators. CHRNB4 forms heteropentameric neuronal acetylcholine receptors with CHRNA2, CHRNA3 and CHRNA4, as well as CHRNA5 and CHRNB3 as accesory subunits. CHRNA3:CHRNB4 being predominant in neurons of the autonomic ganglia, it is known as ganglionic nicotinic receptor. CHRNA3:CHRNB4 or CHRNA3:CHRNA5:CHRNB4 play also an important role in the habenulo-interpeduncular tract, modulating the mesolimbic dopamine system and affecting reward circuits and addiction. Hypothalamic CHRNA3:CHRNB4 nAChR activation by nicotine leads to activation of POMC neurons and a decrease in food intake. This Mus musculus (Mouse) protein is Neuronal acetylcholine receptor subunit beta-4 (Chrnb4).